The following is a 635-amino-acid chain: MAVGDQTEQNYLPKKKKSETEDDKRRKKIVPGSLLKAVVRPGGGDSSPVDGDQVIYHCTVRTLDGVVVESTRSESGGRGVPIRDVLGNSKMILGLLEGIPTMHKGEIAMFKMKPEMHYAEIDCPVSAPENFPKDDELHFEIELLDFSKAKIASDDLGVIKKILNEGEGWESPREPYEVKARISAKSGDGHVIFSHTEEPYFFTFGKSEVPKGLEIGIGTMARKEKAVIYVRKQYLTESPLLHIDQDLEEVHFEVELVHFIQVRDMLGDGRLIKRRIRDGRGEFPMDCPLQDSRLSVHYKGMLLNEEKTVFYDSKIDNNDQPLEFSSGEGLVPEGFEMCTRLMLPGEIALVTCPPDYAYDKFPRPPGVSEGAHVQWEIELLGFETPRDWTGLNFQSIMDEADKIRSTGNRLFKEGKFELAKAKYEKVLREFNHVNPQDEDEGKIFGDTRNMLHLNVAACLLKMGEWRKSIETCNKVLEAKPGHVKGLYRRGMAYIAGGEYDDARNDFNMMIKVDKSSEADATAALLKLKQKEQEAESKARKQFKGLFDKRPGEITEVGSEIREESKTIEEVDETKDNDDDETLEEEGATTVSTERKRKWSEKAWPFLKNVMLQIGIQLGVVLIGILIFQFVSAKFT.

Over residues 1 to 10 (MAVGDQTEQN) the composition is skewed to polar residues. A disordered region spans residues 1–28 (MAVGDQTEQNYLPKKKKSETEDDKRRKK). PPIase FKBP-type domains are found at residues 51 to 147 (GDQV…LDFS), 175 to 260 (PYEV…VHFI), and 291 to 383 (DSRL…LGFE). TPR repeat units follow at residues 400-433 (ADKI…FNHV), 449-482 (NMLH…KPGH), and 483-516 (VKGL…DKSS). A calmodulin-binding region spans residues 530-546 (KEQEAESKARKQFKGLF). Acidic residues predominate over residues 569–586 (EVDETKDNDDDETLEEEG). The disordered stretch occupies residues 569–593 (EVDETKDNDDDETLEEEGATTVSTE). The chain crosses the membrane as a helical; Anchor for type IV membrane protein span at residues 609–629 (VMLQIGIQLGVVLIGILIFQF).

This sequence belongs to the FKBP-type PPIase family. As to quaternary structure, interacts with calmodulin (CaM). Interacts with RPM1 and NAC089. Interacts with the elongase complex core members KCR1, PAS2 and CER10. Expressed ubiquitously.

Its subcellular location is the endoplasmic reticulum membrane. It localises to the cytoplasm. The protein localises to the nucleus. It carries out the reaction [protein]-peptidylproline (omega=180) = [protein]-peptidylproline (omega=0). Functionally, PPIases accelerate the folding of proteins. It catalyzes the cis-trans isomerization of proline imidic peptide bonds in oligopeptides. Essential protein regulating cell division, adhesion and elongation throughout the plant development and embryogenesis. Required for the spatial organization of apical meristems. Involved in the hormonal control of cell division and differentiation mediated by cytokinins and auxin. Regulates the function of NAC089 transcription factor by controlling its targeting to the nucleus upon plant cell division. Interacts with enzymes of the fatty acid elongase complex and favors the generation of very-long-chain fatty acids (VLCFAs) required for polar auxin transport and tissue patterning during plant development. This chain is Peptidyl-prolyl cis-trans isomerase PASTICCINO1 (PAS1), found in Arabidopsis thaliana (Mouse-ear cress).